The following is a 385-amino-acid chain: 1-deoxy-D-xylulose 5-phosphate reductoisomerase (385 aa).

NADPH-binding residues include Thr13, Gly14, Ser15, Ile16, Asn40, and Asn122. 1-deoxy-D-xylulose 5-phosphate is bound at residue Lys123. An NADPH-binding site is contributed by Glu124. Mn(2+) is bound at residue Asp148. Positions 149, 150, 177, and 200 each coordinate 1-deoxy-D-xylulose 5-phosphate. Residue Glu150 participates in Mn(2+) binding. Gly206 serves as a coordination point for NADPH. 4 residues coordinate 1-deoxy-D-xylulose 5-phosphate: Ser213, Asn218, Lys219, and Glu222. Glu222 provides a ligand contact to Mn(2+).

It belongs to the DXR family. Mg(2+) is required as a cofactor. Requires Mn(2+) as cofactor.

It carries out the reaction 2-C-methyl-D-erythritol 4-phosphate + NADP(+) = 1-deoxy-D-xylulose 5-phosphate + NADPH + H(+). Its pathway is isoprenoid biosynthesis; isopentenyl diphosphate biosynthesis via DXP pathway; isopentenyl diphosphate from 1-deoxy-D-xylulose 5-phosphate: step 1/6. Catalyzes the NADPH-dependent rearrangement and reduction of 1-deoxy-D-xylulose-5-phosphate (DXP) to 2-C-methyl-D-erythritol 4-phosphate (MEP). This chain is 1-deoxy-D-xylulose 5-phosphate reductoisomerase, found in Francisella tularensis subsp. novicida (strain U112).